Reading from the N-terminus, the 249-residue chain is 15,16-dihydrobiliverdin:ferredoxin oxidoreductase (249 aa).

It belongs to the HY2 family.

It carries out the reaction 15,16-dihydrobiliverdin + oxidized 2[4Fe-4S]-[ferredoxin] = biliverdin IXalpha + reduced 2[4Fe-4S]-[ferredoxin] + 2 H(+). Functionally, catalyzes the two-electron reduction of biliverdin IX-alpha at the C15 methine bridge. The polypeptide is 15,16-dihydrobiliverdin:ferredoxin oxidoreductase (Prochlorococcus marinus (strain MIT 9303)).